Reading from the N-terminus, the 117-residue chain is Ig kappa chain V region 12F2 (117 aa).

The first 6 residues, 1–6 (LPGARC), serve as a signal peptide directing secretion. The interval 7–29 (AYDMTQTPASVEVAVGGTVTIKC) is framework-1. Cys29 and Cys86 form a disulfide bridge. Residues 30–40 (QASQSISTYLS) form a complementarity-determining-1 region. Positions 41–55 (WYQQKPGQRPKLLIY) are framework-2. A complementarity-determining-2 region spans residues 56 to 62 (RASTLAS). Positions 63–94 (GVSSRFKGSGSGTEFTLTISGVECADAATYYC) are framework-3. The segment at 95 to 106 (QQGWSSSNVENV) is complementarity-determining-3. The tract at residues 107–116 (FGGGTEVVVK) is framework-4.

This is Ig kappa chain V region 12F2 from Oryctolagus cuniculus (Rabbit).